Reading from the N-terminus, the 197-residue chain is Imidazoleglycerol-phosphate dehydratase (197 aa).

Belongs to the imidazoleglycerol-phosphate dehydratase family.

It is found in the cytoplasm. It catalyses the reaction D-erythro-1-(imidazol-4-yl)glycerol 3-phosphate = 3-(imidazol-4-yl)-2-oxopropyl phosphate + H2O. Its pathway is amino-acid biosynthesis; L-histidine biosynthesis; L-histidine from 5-phospho-alpha-D-ribose 1-diphosphate: step 6/9. This Alkalilimnicola ehrlichii (strain ATCC BAA-1101 / DSM 17681 / MLHE-1) protein is Imidazoleglycerol-phosphate dehydratase.